We begin with the raw amino-acid sequence, 430 residues long: Enolase (430 aa).

Glutamine 163 serves as a coordination point for (2R)-2-phosphoglycerate. Glutamate 205 (proton donor) is an active-site residue. 3 residues coordinate Mg(2+): aspartate 242, glutamate 287, and aspartate 314. 4 residues coordinate (2R)-2-phosphoglycerate: lysine 339, arginine 368, serine 369, and lysine 390. Lysine 339 (proton acceptor) is an active-site residue.

The protein belongs to the enolase family. Mg(2+) serves as cofactor.

The protein localises to the cytoplasm. Its subcellular location is the secreted. The protein resides in the cell surface. The catalysed reaction is (2R)-2-phosphoglycerate = phosphoenolpyruvate + H2O. The protein operates within carbohydrate degradation; glycolysis; pyruvate from D-glyceraldehyde 3-phosphate: step 4/5. Its function is as follows. Catalyzes the reversible conversion of 2-phosphoglycerate (2-PG) into phosphoenolpyruvate (PEP). It is essential for the degradation of carbohydrates via glycolysis. The protein is Enolase of Geobacillus sp. (strain WCH70).